We begin with the raw amino-acid sequence, 355 residues long: Protein RecA (355 aa).

72–79 (GPESSGKT) provides a ligand contact to ATP.

This sequence belongs to the RecA family.

It is found in the cytoplasm. In terms of biological role, can catalyze the hydrolysis of ATP in the presence of single-stranded DNA, the ATP-dependent uptake of single-stranded DNA by duplex DNA, and the ATP-dependent hybridization of homologous single-stranded DNAs. It interacts with LexA causing its activation and leading to its autocatalytic cleavage. This is Protein RecA from Wolbachia sp. subsp. Brugia malayi (strain TRS).